The sequence spans 194 residues: Ribosome maturation factor RimP (194 aa).

Belongs to the RimP family.

The protein resides in the cytoplasm. In terms of biological role, required for maturation of 30S ribosomal subunits. This chain is Ribosome maturation factor RimP, found in Jannaschia sp. (strain CCS1).